Here is a 693-residue protein sequence, read N- to C-terminus: F-box protein MAX2 (693 aa).

One can recognise an F-box domain in the interval 3 to 50; sequence STTLSDLPDVILSTISSLVSDSRARNSLSLVSHKFLALERSTRSHLTI. LRR repeat units follow at residues 9–34, 49–74, 75–100, 110–135, 141–167, 168–196, 200–225, 232–257, 274–299, 302–327, 332–356, 357–382, 383–409, and 410–436; these read LPDVILSTISSLVSDSRARNSLSLVS, TIRGNARDLSLVPDCFRSISHLDLSF, LSPWGHTLLASLPIDHQNLLALRLKF, VYTRSPSSLELLLPQWPRIRHIKLLR, SQIPTGGDFVPIFEHCGGFLESLDLSN, FYHWTEDLPPVLLRYADVAARLTRLDLLT, TEGYKSSEIVSITKSCPNLKTFRVAC, FEFVGDETLSAVATSSPKLTLLHMVD, DSAVTAGTLIEVFSGLPNLEELVLDV, DVKHSGVALEALNSKCKKLRVLKLGQ, CSATEWRRLDGVALCGGLQSLSIKN, SGDLTDMGLVAIGRGCCKLTTFEIQG, CENVTVDGLRTMVSLRSKTLTDVRISC, and CKNLDTAASLKAIEPICDRIKRLHIDC. Residues 445 to 465 are disordered; it reads EVEGRVETSEADHEEEDDGYE. 4 LRR repeats span residues 480–505, 508–532, 541–565, and 608–637; these read CSTSDVNGFCSEDRVWEKLEYLSLWI, GEFLTPLPMTGLDDCPNLEEIRIKI, RPAEPEFGLSCLALYPKLSKMQLDC, and DRDVNQRSLSLPGAGLLQECLTLRKLFIHG.

In terms of assembly, part of a SCF (SKP1-cullin-F-box) protein ligase complex. Interacts with SKP1A/ASK1. Interacts with CUL1. Interacts with SMXL6, SMXL7 and SMXL8. Interacts with D14. Forms a complex with D14 and SKP1A/ASK1 in presence of strigolactone. As to expression, expressed in the vasculature of growing leaves and roots, rosette axillary bud, flowers, siliques, funiculi and stems.

The protein resides in the nucleus. The protein operates within protein modification; protein ubiquitination. Its function is as follows. Component of SCF(ASK-cullin-F-box) E3 ubiquitin ligase complexes, which may mediate the ubiquitination and subsequent proteasomal degradation of target proteins. Promotes the senescence. Is necessary for responses to strigolactones and karrikins. Contributes to the selective repression of axillary shoots and moderates the branching by regulating negatively the auxin transport in primary stems, in an AXR1-independent manner. Required for the progression of leaf senescence mediated by methyl jasmonate. Required at each node to suppress axillary bud growth. This Arabidopsis thaliana (Mouse-ear cress) protein is F-box protein MAX2.